Consider the following 1173-residue polypeptide: Fas-binding factor 1 (1173 aa).

Positions 17–168 are disordered; sequence MALRTKKGLK…PSSSKTGLQY (152 aa). Over residues 46-56 the composition is skewed to basic and acidic residues; that stretch reads KPAEPASHAKD. Over residues 80–93 the composition is skewed to low complexity; sequence AGADAEASSVSDAD. Ser-172 is subject to Phosphoserine. Disordered stretches follow at residues 180-225 and 241-566; these read LAGL…GDTP and TTLG…SSRE. The span at 206 to 216 shows a compositional bias: low complexity; that stretch reads SPGAAAGQGPS. Basic and acidic residues-rich tracts occupy residues 247 to 258 and 287 to 299; these read DSPKAERKKTGD and TGER…DKKY. 4 stretches are compositionally biased toward polar residues: residues 331–345, 396–411, 468–477, and 533–544; these read VASS…QSVS, SPVQ…MTPS, VISQKKSQNL, and TGSSMSWSQATT. 3 coiled-coil regions span residues 617-742, 808-917, and 975-1057; these read TAQL…QQAS, QQRE…MNKC, and CELR…VQRQ. A Glycyl lysine isopeptide (Lys-Gly) (interchain with G-Cter in SUMO2) cross-link involves residue Lys-1002. Residues 1091–1124 are disordered; that stretch reads ASLPGLPPRVQGPAASSRDAVQAPASSSPQCSQP. The segment covering 1110-1124 has biased composition (low complexity); the sequence is AVQAPASSSPQCSQP.

As to quaternary structure, interacts with PARD3. May interact with FAS cytoplasmic domain. Interacts with TRAPPC14. In terms of tissue distribution, broadly expressed.

It localises to the cytoplasm. It is found in the cytoskeleton. The protein localises to the microtubule organizing center. The protein resides in the centrosome. Its subcellular location is the centriole. It localises to the spindle pole. It is found in the cell junction. Keratin-binding protein required for epithelial cell polarization. Involved in apical junction complex (AJC) assembly via its interaction with PARD3. Required for ciliogenesis. This is Fas-binding factor 1 (Fbf1) from Mus musculus (Mouse).